The sequence spans 190 residues: Elongation factor P (190 aa).

The residue at position 34 (lysine 34) is an N6-(3,6-diaminohexanoyl)-5-hydroxylysine.

Belongs to the elongation factor P family. In terms of processing, may be beta-lysylated on the epsilon-amino group of Lys-34 by the combined action of EpmA and EpmB, and then hydroxylated on the C5 position of the same residue by EpmC (if this protein is present). Lysylation is critical for the stimulatory effect of EF-P on peptide-bond formation. The lysylation moiety may extend toward the peptidyltransferase center and stabilize the terminal 3-CCA end of the tRNA. Hydroxylation of the C5 position on Lys-34 may allow additional potential stabilizing hydrogen-bond interactions with the P-tRNA.

It is found in the cytoplasm. Its pathway is protein biosynthesis; polypeptide chain elongation. Its function is as follows. Involved in peptide bond synthesis. Alleviates ribosome stalling that occurs when 3 or more consecutive Pro residues or the sequence PPG is present in a protein, possibly by augmenting the peptidyl transferase activity of the ribosome. Modification of Lys-34 is required for alleviation. In Psychrobacter cryohalolentis (strain ATCC BAA-1226 / DSM 17306 / VKM B-2378 / K5), this protein is Elongation factor P.